The following is a 686-amino-acid chain: Pentatricopeptide repeat-containing protein 1, mitochondrial (686 aa).

Over residues 55-67 (RMSSLCSDSSTPV) the composition is skewed to polar residues. Positions 55-79 (RMSSLCSDSSTPVAPQEEEEEESFG) are disordered. PPR repeat units follow at residues 124 to 160 (TPYWYFLQCKRLLKEGKLAEALDLFERQMLKEERLQP), 161 to 195 (LECNYTVLIGGCGRVGYLKKAFRLFNDMKKRDLEP), 196 to 234 (SDATYTALFNVCAESPWKDSALQSALKLRQQLQAQNFQL), 235 to 269 (NLKTYHALLKVAAKCADLRVCLEVFKEIIQKGHAV), and 270 to 306 (TEETFCFLLMGCIQDKKTGFRQAMQVWRQMLSLGIKP). The disordered stretch occupies residues 383 to 407 (KLEGPPAFPEARETSRTQPEVETKA). Residues 392–407 (EARETSRTQPEVETKA) show a composition bias toward basic and acidic residues. PPR repeat units lie at residues 508–542 (DITFFNTLIRKKSKLGDLEGAKALLPILAKKGIVP) and 575–609 (NTHIYSTLINAALKKLDYTYLISILKDMRRNSVPV).

This sequence belongs to the PTCD1 family. Associates with mitochondrial leucine tRNAs. Interacts with ELAC2.

It is found in the mitochondrion matrix. Its function is as follows. Mitochondrial protein implicated in negative regulation of leucine tRNA levels, as well as negative regulation of mitochondria-encoded proteins and COX activity. Also affects the 3'-processing of mitochondrial tRNAs. The chain is Pentatricopeptide repeat-containing protein 1, mitochondrial (Ptcd1) from Rattus norvegicus (Rat).